Here is a 1706-residue protein sequence, read N- to C-terminus: Bifunctional hemolysin/adenylate cyclase (1706 aa).

The segment at 1–399 (MQQSHQAGYA…RRPSLGAVER (399 aa)) is a, catalytic. 349 to 356 (AYGVAGKS) is an ATP binding site. Positions 367-405 (GVPGGRSKSSPDVLETVPASPGLRRPSLGAVERQDSGYD) are disordered. Residues 400 to 912 (QDSGYDSLDG…LKHSIKLEVI (513 aa)) form a b, Ala/Gly-rich region. The interval 500 to 698 (LSAAVFGLGE…SVVGAPVAVV (199 aa)) is required for interaction with CyaC. N6-palmitoyl lysine attachment occurs at residues lysine 860 and lysine 983. The tract at residues 913-1656 (GGDGDDVVLA…RDADHRVEAI (744 aa)) is c. 17 Hemolysin-type calcium-binding repeats span residues 1014 to 1031 (IGGA…DNFL), 1032 to 1049 (AGGA…NDTL), 1050 to 1067 (VGGE…DDVF), 1155 to 1172 (WGDD…DDIL), 1173 to 1190 (RGGL…NDIF), 1279 to 1296 (MGQG…DDLL), 1297 to 1314 (FGGD…NDTL), 1315 to 1332 (YGGL…NDWF), 1335 to 1352 (TPAR…VDTV), 1411 to 1428 (TGDA…ADVL), 1429 to 1446 (AGGE…DDQL), 1447 to 1464 (SGDA…DDWF), 1468 to 1484 (AANA…NDTV), 1537 to 1554 (IGDA…NDVL), 1555 to 1572 (SGGA…SDLL), 1573 to 1590 (SGDA…DDTY), and 1603 to 1620 (ESGG…ADQL). The segment at 1657–1706 (HAANQAIDPAGIEKLVEAMAQYPDPGAAAAAPPAARVPDTLMQSLAVNWR) is d, Asp/Gly-rich.

This sequence in the N-terminal section; belongs to the adenylyl cyclase class-2 family. The protein in the C-terminal section; belongs to the RTX prokaryotic toxin family. In terms of processing, released in a processed form. Post-translationally, palmitoylated at Lys-860 and Lys-983 by CyaC. The toxin only becomes active when modified in position Lys-983: palmitoylation is required for efficient membrane insertion and pore formation of the acylated Hemolysin chain.

The protein resides in the secreted. The protein localises to the host cell membrane. It catalyses the reaction ATP = 3',5'-cyclic AMP + diphosphate. With respect to regulation, activated by host calmodulin. Its function is as follows. Bifunctional adenylate cyclase toxin-hemolysin that plays a crucial role in host colonization. It causes whooping cough by acting on mammalian cells by elevating cAMP-concentration and thus disrupts normal cell function. Adenylate cyclase that is activated by host intracellular calmodulin and catalyzes un-regulated conversion of ATP to cAMP, thereby impairing microbicidal functions of immune effector cells and inducing apoptosis of lung macrophages. In terms of biological role, hemolysin that forms small cation-selective membrane channels, leading to hemolytic activity. The hemolytic activity of CyaA is weak compared with that of the HlyA of E.coli. The sequence is that of Bifunctional hemolysin/adenylate cyclase (cya) from Bordetella bronchiseptica (strain ATCC BAA-588 / NCTC 13252 / RB50) (Alcaligenes bronchisepticus).